We begin with the raw amino-acid sequence, 60 residues long: Transcriptional regulatory protein SenN (60 aa).

The segment at residues 11–31 is a DNA-binding region (H-T-H motif); it reads RFRKRKTFGNQILPLELLIEK.

To B.subtilis SenS.

Functionally, regulates the expression of extracellular-protein genes of Bacillus natto. The protein is Transcriptional regulatory protein SenN (senN) of Bacillus subtilis subsp. natto.